The following is a 329-amino-acid chain: Clavesin-2 (329 aa).

The region spanning 96-257 (IKQALKDGFP…ELGGMLPPYD (162 aa)) is the CRAL-TRIO domain. The disordered stretch occupies residues 293-329 (SPKTMKRSQSVVEPGVLKRPEKVKSEEENMQPLLSLD). Positions 308–319 (VLKRPEKVKSEE) are enriched in basic and acidic residues.

The protein localises to the golgi apparatus. Its subcellular location is the trans-Golgi network membrane. The protein resides in the early endosome membrane. It localises to the cytoplasmic vesicle. It is found in the clathrin-coated vesicle. Required for normal morphology of late endosomes and/or lysosomes in neurons. Binds phosphatidylinositol 3,5-bisphosphate (PtdIns(3,5)P2). This is Clavesin-2 (clvs2) from Danio rerio (Zebrafish).